We begin with the raw amino-acid sequence, 118 residues long: Large ribosomal subunit protein bL20 (118 aa).

This sequence belongs to the bacterial ribosomal protein bL20 family.

In terms of biological role, binds directly to 23S ribosomal RNA and is necessary for the in vitro assembly process of the 50S ribosomal subunit. It is not involved in the protein synthesizing functions of that subunit. This is Large ribosomal subunit protein bL20 from Francisella tularensis subsp. holarctica (strain FTNF002-00 / FTA).